The chain runs to 101 residues: Putative pterin-4-alpha-carbinolamine dehydratase (101 aa).

Belongs to the pterin-4-alpha-carbinolamine dehydratase family.

The catalysed reaction is (4aS,6R)-4a-hydroxy-L-erythro-5,6,7,8-tetrahydrobiopterin = (6R)-L-erythro-6,7-dihydrobiopterin + H2O. This chain is Putative pterin-4-alpha-carbinolamine dehydratase, found in Rhodopseudomonas palustris (strain BisB18).